Consider the following 108-residue polypeptide: Curli assembly protein CsgC (108 aa).

The N-terminal stretch at 1–8 is a signal peptide; sequence MHTLLLLA.

This sequence belongs to the CsgC/AgfC family.

Its subcellular location is the periplasm. Functionally, plays a role in the extracellular assembly of CsgA into thin aggregative fimbriae (Tafi) fibers. Assembly may also require CsgE. Tafi are thought to be assembled via an extracellular nucleation-precipitation (ENP) pathway, and possibly also via an intracellular non-CsgC-dependent pathway. This Salmonella arizonae (strain ATCC BAA-731 / CDC346-86 / RSK2980) protein is Curli assembly protein CsgC.